A 748-amino-acid polypeptide reads, in one-letter code: Cytosolic phospholipase A2 (748 aa).

Residues 1–178 form a phospholipid binding region; it reads MSFIDPYQHI…MRKLLGPKKS (178 aa). Residue S2 is modified to Phosphoserine. Residues 6-122 form the C2 domain; that stretch reads PYQHIIVEHQ…KVGEKKEVPF (117 aa). Ca(2+) contacts are provided by D40, T41, D43, N65, D93, A94, and N95. The 602-residue stretch at 138-739 folds into the PLA2c domain; it reads VCSSPDLRFS…SNVEARRFFN (602 aa). The active-site Nucleophile is the S228. T268 is subject to Phosphothreonine. The disordered stretch occupies residues 428 to 458; it reads HIVSNDSSDSDDESQEPKGTEGEDAEREYQN. Residues S434, S435, and S437 each carry the phosphoserine modification. Over residues 442 to 458 the composition is skewed to basic and acidic residues; that stretch reads QEPKGTEGEDAEREYQN. S505 is subject to Phosphoserine; by MAPK. Position 514 is a phosphoserine (S514). A Glycyl lysine isopeptide (Lys-Gly) (interchain with G-Cter in SUMO2) cross-link involves residue K540. The active-site Proton acceptor is D548. A Glycyl lysine isopeptide (Lys-Gly) (interchain with G-Cter in SUMO2) cross-link involves residue K605. Residues S726 and S728 each carry the phosphoserine modification.

In terms of assembly, interacts with KAT5. Phosphorylated at both Ser-505 and Ser-726 in response to mitogenic stimuli.

It is found in the cytoplasm. Its subcellular location is the golgi apparatus membrane. It localises to the nucleus envelope. The catalysed reaction is a 1,2-diacyl-sn-glycero-3-phosphocholine + H2O = a 1-acyl-sn-glycero-3-phosphocholine + a fatty acid + H(+). It carries out the reaction a 1-O-alkyl-2-acyl-sn-glycero-3-phosphocholine + H2O = a 1-O-alkyl-sn-glycero-3-phosphocholine + a fatty acid + H(+). It catalyses the reaction a 1-acyl-sn-glycero-3-phosphocholine + H2O = sn-glycerol 3-phosphocholine + a fatty acid + H(+). The enzyme catalyses 1-hexadecanoyl-2-(5Z,8Z,11Z,14Z-eicosatetraenoyl)-sn-glycero-3-phosphocholine + H2O = 1-hexadecanoyl-sn-glycero-3-phosphocholine + (5Z,8Z,11Z,14Z)-eicosatetraenoate + H(+). The catalysed reaction is 1,2-di-(5Z,8Z,11Z,14Z-eicosatetraenoyl)-sn-glycero-3-phosphocholine + H2O = 1-(5Z,8Z,11Z,14Z-eicosatetraenoyl)-sn-glycero-3-phosphocholine + (5Z,8Z,11Z,14Z)-eicosatetraenoate + H(+). It carries out the reaction 1-octadecanoyl-2-(5Z,8Z,11Z,14Z-eicosatetraenoyl)-sn-glycero-3-phosphocholine + H2O = 1-octadecanoyl-sn-glycero-3-phosphocholine + (5Z,8Z,11Z,14Z)-eicosatetraenoate + H(+). It catalyses the reaction 1-hexadecanoyl-2-(9Z,12Z-octadecadienoyl)-sn-glycero-3-phosphocholine + H2O = (9Z,12Z)-octadecadienoate + 1-hexadecanoyl-sn-glycero-3-phosphocholine + H(+). The enzyme catalyses 1-octadecanoyl-2-(9Z,12Z,15Z-octadecatrienoyl)-sn-glycero-3-phosphocholine + H2O = (9Z,12Z,15Z)-octadecatrienoate + 1-octadecanoyl-sn-glycero-3-phosphocholine + H(+). The catalysed reaction is 1-(5Z,8Z,11Z,14Z-eicosatetraenoyl)-2-hexadecanoyl-sn-glycero-3-phosphocholine + H2O = 1-(5Z,8Z,11Z,14Z-eicosatetraenoyl)-sn-glycero-3-phosphocholine + hexadecanoate + H(+). It carries out the reaction 1-O-hexadecyl-2-(5Z,8Z,11Z,14Z)-eicosatetraenoyl-sn-glycero-3-phosphocholine + H2O = 1-O-hexadecyl-sn-glycero-3-phosphocholine + (5Z,8Z,11Z,14Z)-eicosatetraenoate + H(+). It catalyses the reaction 1,2-di-(9Z-octadecenoyl)-sn-glycero-3-phospho-(1'-sn-glycerol) + H2O = 1-(9Z-octadecenoyl)-sn-glycero-3-phospho-(1'-sn-glycerol) + (9Z)-octadecenoate + H(+). The enzyme catalyses 1-octadecanoyl-2-(5Z,8Z,11Z,14Z-eicosatetraenoyl)-sn-glycero-3-phosphate + H2O = 1-octadecanoyl-sn-glycero-3-phosphate + (5Z,8Z,11Z,14Z)-eicosatetraenoate + H(+). The catalysed reaction is 1-hexadecanoyl-sn-glycero-3-phosphocholine + H2O = sn-glycerol 3-phosphocholine + hexadecanoate + H(+). It carries out the reaction 2-(prostaglandin E2)-sn-glycero-3-phosphoethanolamine + H2O = sn-glycero-3-phosphoethanolamine + prostaglandin E2 + H(+). It catalyses the reaction 2-[(15S)-hydroxy-(5Z,8Z,11Z,13E)-eicosatetraenoyl]-sn-glycero-3-phosphocholine + H2O = (15S)-hydroxy-(5Z,8Z,11Z,13E)-eicosatetraenoate + sn-glycerol 3-phosphocholine + H(+). The enzyme catalyses 2-[(15R)-hydroxy-(5Z,8Z,11Z,13E)-eicosatetraenoyl]-sn-glycero-3-phosphocholine + H2O = (15R)-hydroxy-(5Z,8Z,11Z,13E)-eicosatetraenoate + sn-glycerol 3-phosphocholine + H(+). The catalysed reaction is 2-(prostaglandin E2)-sn-glycero-3-phosphocholine + H2O = prostaglandin E2 + sn-glycerol 3-phosphocholine + H(+). It carries out the reaction 2-[(11R)-hydroxy-(5Z,8Z,12E,14Z)-eicosatetraenoyl]-sn-glycero-3-phosphocholine + H2O = (11R)-hydroxy-(5Z,8Z,12E,14Z)-eicosatetraenoate + sn-glycerol 3-phosphocholine + H(+). It catalyses the reaction 1-(5Z,8Z,11Z,14Z-eicosatetraenoyl)-2-O-hexadecyl-sn-glycero-3-phosphocholine + H2O = 2-O-hexadecyl-sn-glycero-3-phosphocholine + (5Z,8Z,11Z,14Z)-eicosatetraenoate + H(+). The enzyme catalyses 1-octadecanoyl-2-(5Z,8Z,11Z,14Z-eicosatetraenoyl)-sn-glycero-3-phosphocholine + glycerol = 1-(5Z,8Z,11Z,14Z-eicosatetraenoyl)-glycerol + 1-octadecanoyl-sn-glycero-3-phosphocholine. The catalysed reaction is 1-octadecanoyl-2-(9Z,12Z,15Z-octadecatrienoyl)-sn-glycero-3-phosphocholine + glycerol = 1-(9Z,12Z,15Z-octadecatrienoyl)-glycerol + 1-octadecanoyl-sn-glycero-3-phosphocholine. It participates in membrane lipid metabolism; glycerophospholipid metabolism. It functions in the pathway lipid metabolism; arachidonate metabolism. Its pathway is lipid metabolism; prostaglandin biosynthesis. The protein operates within lipid metabolism; leukotriene B4 biosynthesis. With respect to regulation, activated by cytosolic calcium, which is necessary for binding to membrane lipids. Activated by phosphorylation in response to mitogenic stimuli. Functionally, has primarily calcium-dependent phospholipase and lysophospholipase activities, with a major role in membrane lipid remodeling and biosynthesis of lipid mediators of the inflammatory response. Plays an important role in embryo implantation and parturition through its ability to trigger prostanoid production. Preferentially hydrolyzes the ester bond of the fatty acyl group attached at sn-2 position of phospholipids (phospholipase A2 activity). Selectively hydrolyzes sn-2 arachidonoyl group from membrane phospholipids, providing the precursor for eicosanoid biosynthesis via the cyclooxygenase pathway. In an alternative pathway of eicosanoid biosynthesis, hydrolyzes sn-2 fatty acyl chain of eicosanoid lysophopholipids to release free bioactive eicosanoids. Hydrolyzes the ester bond of the fatty acyl group attached at sn-1 position of phospholipids (phospholipase A1 activity) only if an ether linkage rather than an ester linkage is present at the sn-2 position. This hydrolysis is not stereospecific. Has calcium-independent phospholipase A2 and lysophospholipase activities in the presence of phosphoinositides. Has O-acyltransferase activity. Catalyzes the transfer of fatty acyl chains from phospholipids to a primary hydroxyl group of glycerol (sn-1 or sn-3), potentially contributing to monoacylglycerol synthesis. The chain is Cytosolic phospholipase A2 (PLA2G4A) from Oryctolagus cuniculus (Rabbit).